The following is a 179-amino-acid chain: Coiled-coil domain-containing protein 32 (179 aa).

Positions 75-98 (EVYLASLEKKLRRIKGLNEEVTSK) form a coiled coil. Residues 157 to 179 (FLIPPESQAEKPEARDEPAAAEQ) are disordered. The span at 164–179 (QAEKPEARDEPAAAEQ) shows a compositional bias: basic and acidic residues.

As to quaternary structure, interacts with AP2S1; the interaction is direct and mediates association with adaptor protein complex 2 (AP-2).

It localises to the membrane. It is found in the coated pit. Its function is as follows. Regulates clathrin-mediated endocytsois of cargos such as transferrin probably through the association and modulation of adaptor protein complex 2 (AP-2). Has a role in ciliogenesis. Required for proper cephalic and left/right axis development. The polypeptide is Coiled-coil domain-containing protein 32 (Ccdc32) (Rattus norvegicus (Rat)).